A 199-amino-acid chain; its full sequence is Thymidine kinase (199 aa).

ATP-binding positions include 23–30 (GSMFSGKT) and 95–98 (DEAQ). Residue glutamate 96 is the Proton acceptor of the active site. Residues cysteine 152, cysteine 155, cysteine 184, and cysteine 187 each coordinate Zn(2+).

This sequence belongs to the thymidine kinase family. As to quaternary structure, homotetramer.

The protein localises to the cytoplasm. It carries out the reaction thymidine + ATP = dTMP + ADP + H(+). This chain is Thymidine kinase, found in Bacteroides thetaiotaomicron (strain ATCC 29148 / DSM 2079 / JCM 5827 / CCUG 10774 / NCTC 10582 / VPI-5482 / E50).